The sequence spans 58 residues: MDARLLDILVCPICKGNLEHRKAEKELVCKPCKLAFPIRDDIPIMLEDEARQLTADGQ.

The protein belongs to the UPF0434 family.

This is UPF0434 protein Daro_3207 from Dechloromonas aromatica (strain RCB).